The following is a 214-amino-acid chain: Phosphatidylserine decarboxylase proenzyme (214 aa).

The Schiff-base intermediate with substrate; via pyruvic acid role is filled by serine 182. Serine 182 is subject to Pyruvic acid (Ser); by autocatalysis.

It belongs to the phosphatidylserine decarboxylase family. PSD-A subfamily. As to quaternary structure, heterodimer of a large membrane-associated beta subunit and a small pyruvoyl-containing alpha subunit. Pyruvate is required as a cofactor. Post-translationally, is synthesized initially as an inactive proenzyme. Formation of the active enzyme involves a self-maturation process in which the active site pyruvoyl group is generated from an internal serine residue via an autocatalytic post-translational modification. Two non-identical subunits are generated from the proenzyme in this reaction, and the pyruvate is formed at the N-terminus of the alpha chain, which is derived from the carboxyl end of the proenzyme. The post-translation cleavage follows an unusual pathway, termed non-hydrolytic serinolysis, in which the side chain hydroxyl group of the serine supplies its oxygen atom to form the C-terminus of the beta chain, while the remainder of the serine residue undergoes an oxidative deamination to produce ammonia and the pyruvoyl prosthetic group on the alpha chain.

Its subcellular location is the cell membrane. The enzyme catalyses a 1,2-diacyl-sn-glycero-3-phospho-L-serine + H(+) = a 1,2-diacyl-sn-glycero-3-phosphoethanolamine + CO2. The protein operates within phospholipid metabolism; phosphatidylethanolamine biosynthesis; phosphatidylethanolamine from CDP-diacylglycerol: step 2/2. Catalyzes the formation of phosphatidylethanolamine (PtdEtn) from phosphatidylserine (PtdSer). In Burkholderia vietnamiensis (strain G4 / LMG 22486) (Burkholderia cepacia (strain R1808)), this protein is Phosphatidylserine decarboxylase proenzyme.